A 427-amino-acid polypeptide reads, in one-letter code: 3-phosphoshikimate 1-carboxyvinyltransferase (427 aa).

3-phosphoshikimate is bound by residues Lys20, Ser21, and Arg25. Lys20 is a binding site for phosphoenolpyruvate. The phosphoenolpyruvate site is built by Gly92 and Arg120. The 3-phosphoshikimate site is built by Ser166, Gln168, Asp312, and Lys339. A phosphoenolpyruvate-binding site is contributed by Gln168. Residue Asp312 is the Proton acceptor of the active site. Residues Arg343 and Arg385 each coordinate phosphoenolpyruvate.

This sequence belongs to the EPSP synthase family. As to quaternary structure, monomer.

It localises to the cytoplasm. The catalysed reaction is 3-phosphoshikimate + phosphoenolpyruvate = 5-O-(1-carboxyvinyl)-3-phosphoshikimate + phosphate. It participates in metabolic intermediate biosynthesis; chorismate biosynthesis; chorismate from D-erythrose 4-phosphate and phosphoenolpyruvate: step 6/7. Its function is as follows. Catalyzes the transfer of the enolpyruvyl moiety of phosphoenolpyruvate (PEP) to the 5-hydroxyl of shikimate-3-phosphate (S3P) to produce enolpyruvyl shikimate-3-phosphate and inorganic phosphate. This is 3-phosphoshikimate 1-carboxyvinyltransferase from Streptococcus thermophilus (strain ATCC BAA-250 / LMG 18311).